The following is a 670-amino-acid chain: Tripeptidyl-peptidase SED1 (670 aa).

An N-terminal signal peptide occupies residues Met1–Ala20. Residues Ala21–Ser231 constitute a propeptide, removed in mature form. The Peptidase S53 domain occupies Leu241 to Leu669. Residues Glu318 and Asp322 each act as charge relay system in the active site. Asn334, Asn387, Asn488, Asn508, and Asn551 each carry an N-linked (GlcNAc...) asparagine glycan. The active-site Charge relay system is the Ser586. Asp627, Val628, Gly647, and Asp649 together coordinate Ca(2+).

The cofactor is Ca(2+).

The protein resides in the secreted. The protein localises to the extracellular space. The catalysed reaction is Release of an N-terminal tripeptide from a polypeptide.. Secreted tripeptidyl-peptidase which degrades proteins at acidic pHs and is involved in virulence. The chain is Tripeptidyl-peptidase SED1 (SED1) from Arthroderma otae (strain ATCC MYA-4605 / CBS 113480) (Microsporum canis).